The sequence spans 199 residues: Large ribosomal subunit protein bL25 (199 aa).

The protein belongs to the bacterial ribosomal protein bL25 family. CTC subfamily. In terms of assembly, part of the 50S ribosomal subunit; part of the 5S rRNA/L5/L18/L25 subcomplex. Contacts the 5S rRNA. Binds to the 5S rRNA independently of L5 and L18.

This is one of the proteins that binds to the 5S RNA in the ribosome where it forms part of the central protuberance. This is Large ribosomal subunit protein bL25 from Pelodictyon phaeoclathratiforme (strain DSM 5477 / BU-1).